The following is a 297-amino-acid chain: tRNA uridine(34) hydroxylase (297 aa).

In terms of domain architecture, Rhodanese spans 133–228; it reads SGDEVVFFDG…YGETFKDQGL (96 aa). The Cysteine persulfide intermediate role is filled by cysteine 188.

This sequence belongs to the TrhO family.

The catalysed reaction is uridine(34) in tRNA + AH2 + O2 = 5-hydroxyuridine(34) in tRNA + A + H2O. Functionally, catalyzes oxygen-dependent 5-hydroxyuridine (ho5U) modification at position 34 in tRNAs. The polypeptide is tRNA uridine(34) hydroxylase (Pseudarthrobacter chlorophenolicus (strain ATCC 700700 / DSM 12829 / CIP 107037 / JCM 12360 / KCTC 9906 / NCIMB 13794 / A6) (Arthrobacter chlorophenolicus)).